The chain runs to 247 residues: Cell division protein ZapD (247 aa).

It belongs to the ZapD family. Interacts with FtsZ.

It is found in the cytoplasm. Its function is as follows. Cell division factor that enhances FtsZ-ring assembly. Directly interacts with FtsZ and promotes bundling of FtsZ protofilaments, with a reduction in FtsZ GTPase activity. In Cronobacter sakazakii (strain ATCC BAA-894) (Enterobacter sakazakii), this protein is Cell division protein ZapD.